We begin with the raw amino-acid sequence, 177 residues long: R-phycoerythrin beta chain (177 aa).

The phycourobilin site is built by Cys50 and Cys61. Position 72 is an N4-methylasparagine (Asn72). Residues Cys82 and Cys158 each contribute to the (2R,3E)-phycoerythrobilin site.

It belongs to the phycobiliprotein family. As to quaternary structure, heterodimer of an alpha and a beta chain. Contains two covalently linked phycoerythrobilin chromophores and one covalently linked phycourobilin chromophore.

It localises to the plastid. It is found in the chloroplast thylakoid membrane. Functionally, light-harvesting photosynthetic bile pigment-protein from the phycobiliprotein complex. This Pyropia yezoensis (Susabi-nori) protein is R-phycoerythrin beta chain (cpeB).